Here is a 158-residue protein sequence, read N- to C-terminus: Transcription antitermination protein NusB (158 aa).

The span at Met1–Lys13 shows a compositional bias: polar residues. The tract at residues Met1 to Arg24 is disordered.

This sequence belongs to the NusB family.

Its function is as follows. Involved in transcription antitermination. Required for transcription of ribosomal RNA (rRNA) genes. Binds specifically to the boxA antiterminator sequence of the ribosomal RNA (rrn) operons. The sequence is that of Transcription antitermination protein NusB from Marinobacter nauticus (strain ATCC 700491 / DSM 11845 / VT8) (Marinobacter aquaeolei).